A 215-amino-acid chain; its full sequence is Ribonuclease T (215 aa).

One can recognise an Exonuclease domain in the interval 20–194 (VVIDVETAGF…YDTERTAVLF (175 aa)). Mg(2+) contacts are provided by Asp23, Glu25, His181, and Asp186. Residue His181 is the Proton donor/acceptor of the active site.

This sequence belongs to the RNase T family. Homodimer. It depends on Mg(2+) as a cofactor.

In terms of biological role, trims short 3' overhangs of a variety of RNA species, leaving a one or two nucleotide 3' overhang. Responsible for the end-turnover of tRNA: specifically removes the terminal AMP residue from uncharged tRNA (tRNA-C-C-A). Also appears to be involved in tRNA biosynthesis. This Salmonella choleraesuis (strain SC-B67) protein is Ribonuclease T.